We begin with the raw amino-acid sequence, 92 residues long: Large ribosomal subunit protein uL24c (92 aa).

The protein belongs to the universal ribosomal protein uL24 family. Part of the 50S ribosomal subunit.

The protein localises to the plastid. The protein resides in the chloroplast. In terms of biological role, one of two assembly initiator proteins, it binds directly to the 5'-end of the 23S rRNA, where it nucleates assembly of the 50S subunit. This chain is Large ribosomal subunit protein uL24c (rpl24), found in Gracilaria tenuistipitata var. liui (Red alga).